Reading from the N-terminus, the 420-residue chain is Cytochrome c biogenesis protein Ccs1 (420 aa).

Transmembrane regions (helical) follow at residues 12 to 32 (LRFS…GTVI), 71 to 91 (TWWF…CTFL), and 157 to 177 (IAPI…IVGS).

This sequence belongs to the Ccs1/CcsB family. As to quaternary structure, may interact with CcsA.

Its subcellular location is the plastid. The protein localises to the chloroplast thylakoid membrane. Functionally, required during biogenesis of c-type cytochromes (cytochrome c6 and cytochrome f) at the step of heme attachment. The sequence is that of Cytochrome c biogenesis protein Ccs1 from Phaeodactylum tricornutum (strain CCAP 1055/1).